The following is a 409-amino-acid chain: Peptidase T (409 aa).

Histidine 78 contributes to the Zn(2+) binding site. Aspartate 80 is an active-site residue. Residue aspartate 141 coordinates Zn(2+). Residue glutamate 175 is the Proton acceptor of the active site. Zn(2+) contacts are provided by glutamate 176, aspartate 198, and histidine 380.

It belongs to the peptidase M20B family. Zn(2+) serves as cofactor.

The protein localises to the cytoplasm. The enzyme catalyses Release of the N-terminal residue from a tripeptide.. Functionally, cleaves the N-terminal amino acid of tripeptides. The sequence is that of Peptidase T from Caldanaerobacter subterraneus subsp. tengcongensis (strain DSM 15242 / JCM 11007 / NBRC 100824 / MB4) (Thermoanaerobacter tengcongensis).